Reading from the N-terminus, the 186-residue chain is Ribosome-recycling factor (186 aa).

Belongs to the RRF family.

Its subcellular location is the cytoplasm. In terms of biological role, responsible for the release of ribosomes from messenger RNA at the termination of protein biosynthesis. May increase the efficiency of translation by recycling ribosomes from one round of translation to another. The protein is Ribosome-recycling factor of Nitratiruptor sp. (strain SB155-2).